Consider the following 118-residue polypeptide: Holo-[acyl-carrier-protein] synthase (118 aa).

Residues D8 and E58 each contribute to the Mg(2+) site.

This sequence belongs to the P-Pant transferase superfamily. AcpS family. Mg(2+) serves as cofactor.

It is found in the cytoplasm. It catalyses the reaction apo-[ACP] + CoA = holo-[ACP] + adenosine 3',5'-bisphosphate + H(+). Functionally, transfers the 4'-phosphopantetheine moiety from coenzyme A to a Ser of acyl-carrier-protein. In Listeria monocytogenes serotype 4b (strain CLIP80459), this protein is Holo-[acyl-carrier-protein] synthase.